We begin with the raw amino-acid sequence, 182 residues long: Adenine phosphoribosyltransferase (182 aa).

The protein belongs to the purine/pyrimidine phosphoribosyltransferase family. As to quaternary structure, homodimer.

The protein resides in the cytoplasm. It carries out the reaction AMP + diphosphate = 5-phospho-alpha-D-ribose 1-diphosphate + adenine. It participates in purine metabolism; AMP biosynthesis via salvage pathway; AMP from adenine: step 1/1. In terms of biological role, catalyzes a salvage reaction resulting in the formation of AMP, that is energically less costly than de novo synthesis. This chain is Adenine phosphoribosyltransferase, found in Sulfurimonas denitrificans (strain ATCC 33889 / DSM 1251) (Thiomicrospira denitrificans (strain ATCC 33889 / DSM 1251)).